The sequence spans 687 residues: DNA ligase (687 aa).

Residues 34–38 (DAEYD), 83–84 (SL), and glutamate 117 each bind NAD(+). Lysine 119 serves as the catalytic N6-AMP-lysine intermediate. 4 residues coordinate NAD(+): arginine 140, glutamate 182, lysine 298, and lysine 322. The Zn(2+) site is built by cysteine 416, cysteine 419, cysteine 434, and cysteine 439. Residues 609–687 (EARGPFAGKT…EEEFVRLLKE (79 aa)) enclose the BRCT domain.

It belongs to the NAD-dependent DNA ligase family. LigA subfamily. Requires Mg(2+) as cofactor. Mn(2+) is required as a cofactor.

The enzyme catalyses NAD(+) + (deoxyribonucleotide)n-3'-hydroxyl + 5'-phospho-(deoxyribonucleotide)m = (deoxyribonucleotide)n+m + AMP + beta-nicotinamide D-nucleotide.. Functionally, DNA ligase that catalyzes the formation of phosphodiester linkages between 5'-phosphoryl and 3'-hydroxyl groups in double-stranded DNA using NAD as a coenzyme and as the energy source for the reaction. It is essential for DNA replication and repair of damaged DNA. The chain is DNA ligase from Anaeromyxobacter dehalogenans (strain 2CP-C).